The sequence spans 302 residues: Oxygen-dependent coproporphyrinogen-III oxidase (302 aa).

Substrate is bound at residue Ser94. 2 residues coordinate a divalent metal cation: His98 and His108. The Proton donor role is filled by His108. Position 110–112 (110–112 (NVR)) interacts with substrate. A divalent metal cation-binding residues include His147 and His177. The interval 242–277 (YVEFNLVYDRGTIFGLQSGGRTESILMSLPPLVRWD) is important for dimerization. A substrate-binding site is contributed by 260–262 (GGR).

It belongs to the aerobic coproporphyrinogen-III oxidase family. Homodimer. A divalent metal cation is required as a cofactor.

It is found in the cytoplasm. The enzyme catalyses coproporphyrinogen III + O2 + 2 H(+) = protoporphyrinogen IX + 2 CO2 + 2 H2O. Its pathway is porphyrin-containing compound metabolism; protoporphyrin-IX biosynthesis; protoporphyrinogen-IX from coproporphyrinogen-III (O2 route): step 1/1. Functionally, involved in the heme biosynthesis. Catalyzes the aerobic oxidative decarboxylation of propionate groups of rings A and B of coproporphyrinogen-III to yield the vinyl groups in protoporphyrinogen-IX. This Alcanivorax borkumensis (strain ATCC 700651 / DSM 11573 / NCIMB 13689 / SK2) protein is Oxygen-dependent coproporphyrinogen-III oxidase.